The sequence spans 1025 residues: Multidrug resistance protein MdtC (1025 aa).

The next 12 membrane-spanning stretches (helical) occupy residues 3-23, 333-353, 360-380, 387-407, 431-451, 463-483, 528-548, 853-873, 875-895, 897-917, 953-973, and 984-1004; these read FFALFIYRPVATILLSVAITL, EVEQTLIISVALVILVVFLFL, IIPAVSVPVSLIGTFAAMYLC, LSLMALTIATGFVVDDAIVVL, VGFTVLSMSLSLVAVFLPLLL, FAVTLSVAIGISLLVSLTLTP, LVGVVLLGTIALNIWLYISIP, VILIIAAIATVYIVLGILYES, VHPLTILSTLPSAGVGALLAL, LFNAPFSLIALIGIMLLIGIV, PIMMTTLAALFGALPLVLSGG, and ITIVGGLVMSQLLTLYTTPVV.

Belongs to the resistance-nodulation-cell division (RND) (TC 2.A.6) family. MdtC subfamily. As to quaternary structure, part of a tripartite efflux system composed of MdtA, MdtB and MdtC. MdtC forms a heteromultimer with MdtB.

Its subcellular location is the cell inner membrane. In terms of biological role, the MdtABC tripartite complex confers resistance against novobiocin and deoxycholate. The chain is Multidrug resistance protein MdtC from Escherichia coli (strain K12 / MC4100 / BW2952).